Here is a 272-residue protein sequence, read N- to C-terminus: Shikimate dehydrogenase (NADP(+)) (272 aa).

Residues 14–16 and Thr61 each bind shikimate; that span reads SKS. The active-site Proton acceptor is Lys65. Glu77 contacts NADP(+). Asn86 and Asp102 together coordinate shikimate. Residues 126–130, 149–154, and Met213 each bind NADP(+); these read GAGGA and NRTVSR. Tyr215 is a binding site for shikimate. Gly237 serves as a coordination point for NADP(+).

It belongs to the shikimate dehydrogenase family. As to quaternary structure, homodimer.

It catalyses the reaction shikimate + NADP(+) = 3-dehydroshikimate + NADPH + H(+). It functions in the pathway metabolic intermediate biosynthesis; chorismate biosynthesis; chorismate from D-erythrose 4-phosphate and phosphoenolpyruvate: step 4/7. Functionally, involved in the biosynthesis of the chorismate, which leads to the biosynthesis of aromatic amino acids. Catalyzes the reversible NADPH linked reduction of 3-dehydroshikimate (DHSA) to yield shikimate (SA). This chain is Shikimate dehydrogenase (NADP(+)), found in Escherichia coli O6:K15:H31 (strain 536 / UPEC).